The primary structure comprises 167 residues: Transcriptional regulator MraZ (167 aa).

SpoVT-AbrB domains lie at Glu-8 to His-51 and Ser-92 to Thr-135.

It belongs to the MraZ family. Forms oligomers.

The protein localises to the cytoplasm. It localises to the nucleoid. The protein is Transcriptional regulator MraZ of Ruegeria sp. (strain TM1040) (Silicibacter sp.).